The following is a 113-amino-acid chain: Molt-inhibiting hormone (113 aa).

The first 35 residues, 1 to 35, serve as a signal peptide directing secretion; that stretch reads MMSRTESRYSSQRTWLLSMVVLAALWSISVQRATA. 3 disulfides stabilise this stretch: C42/C79, C59/C75, and C62/C88.

The protein belongs to the arthropod CHH/MIH/GIH/VIH hormone family.

Its subcellular location is the secreted. Functionally, inhibits Y-organs where molting hormone (ecdysteroid) is secreted. A molting cycle is initiated when MIH secretion diminishes or stops. This chain is Molt-inhibiting hormone, found in Metacarcinus magister (Dungeness crab).